A 174-amino-acid polypeptide reads, in one-letter code: NADH-ubiquinone oxidoreductase chain 6 (174 aa).

4 consecutive transmembrane segments (helical) span residues L24 to M44, F48 to Y68, M82 to L102, and L143 to T163.

This sequence belongs to the complex I subunit 6 family.

It is found in the mitochondrion membrane. The catalysed reaction is a ubiquinone + NADH + 5 H(+)(in) = a ubiquinol + NAD(+) + 4 H(+)(out). Core subunit of the mitochondrial membrane respiratory chain NADH dehydrogenase (Complex I) that is believed to belong to the minimal assembly required for catalysis. Complex I functions in the transfer of electrons from NADH to the respiratory chain. The immediate electron acceptor for the enzyme is believed to be ubiquinone. The sequence is that of NADH-ubiquinone oxidoreductase chain 6 (ND6) from Ceratitis capitata (Mediterranean fruit fly).